An 88-amino-acid chain; its full sequence is Small ribosomal subunit protein bS20 (88 aa).

Belongs to the bacterial ribosomal protein bS20 family.

In terms of biological role, binds directly to 16S ribosomal RNA. The chain is Small ribosomal subunit protein bS20 from Desulforudis audaxviator (strain MP104C).